The sequence spans 144 residues: Large ribosomal subunit protein uL16 (144 aa).

A compositionally biased stretch (basic residues) spans 1-16 (MLIPKRVKYRKQHRPR). Residues 1 to 25 (MLIPKRVKYRKQHRPRGNGGVSKGG) are disordered.

The protein belongs to the universal ribosomal protein uL16 family. In terms of assembly, part of the 50S ribosomal subunit.

In terms of biological role, binds 23S rRNA and is also seen to make contacts with the A and possibly P site tRNAs. This Desulforamulus reducens (strain ATCC BAA-1160 / DSM 100696 / MI-1) (Desulfotomaculum reducens) protein is Large ribosomal subunit protein uL16.